Consider the following 199-residue polypeptide: Tegument protein UL14 homolog (199 aa).

Polar residues predominate over residues 176–191 (TDMNQMQPQPISKNEN). A disordered region spans residues 176–199 (TDMNQMQPQPISKNENPPTPHTDV).

Belongs to the alphaherpesvirinae HHV-1 UL14 protein family.

It is found in the virion tegument. The protein resides in the host cytoplasm. It localises to the host nucleus. In terms of biological role, contributes to the nuclear transport of the viral transcriptional activator VP16 homolog during the early phase of infection. Therefore, participates indirectly in the regulation of the immediate-early gene expression. Additionally, seems to be important for efficient nuclear targeting of capsids. The sequence is that of Tegument protein UL14 homolog from Varicella-zoster virus (strain Dumas) (HHV-3).